A 425-amino-acid chain; its full sequence is Dihydroorotase (425 aa).

Zn(2+) contacts are provided by His56 and His58. Substrate contacts are provided by residues 58-60 and Asn90; that span reads HYR. The Zn(2+) site is built by Asp148, His175, and His228. A substrate-binding site is contributed by Asn274. Residue Asp301 participates in Zn(2+) binding. Asp301 is an active-site residue. Residues His305 and 319–320 each bind substrate; that span reads FG.

The protein belongs to the metallo-dependent hydrolases superfamily. DHOase family. Class I DHOase subfamily. It depends on Zn(2+) as a cofactor.

It catalyses the reaction (S)-dihydroorotate + H2O = N-carbamoyl-L-aspartate + H(+). Its pathway is pyrimidine metabolism; UMP biosynthesis via de novo pathway; (S)-dihydroorotate from bicarbonate: step 3/3. In terms of biological role, catalyzes the reversible cyclization of carbamoyl aspartate to dihydroorotate. The chain is Dihydroorotase from Lactobacillus delbrueckii subsp. bulgaricus (strain ATCC BAA-365 / Lb-18).